We begin with the raw amino-acid sequence, 240 residues long: Ditrans,polycis-undecaprenyl-diphosphate synthase ((2E,6E)-farnesyl-diphosphate specific) (240 aa).

D18 is an active-site residue. Mg(2+) is bound at residue D18. Substrate contacts are provided by residues 19 to 22 (GNGR), W23, R31, H35, and 63 to 65 (SSE). N66 functions as the Proton acceptor in the catalytic mechanism. Residues W67, R69, R186, and 192 to 194 (RIS) each bind substrate. E205 serves as a coordination point for Mg(2+).

This sequence belongs to the UPP synthase family. In terms of assembly, homodimer. Requires Mg(2+) as cofactor.

The catalysed reaction is 8 isopentenyl diphosphate + (2E,6E)-farnesyl diphosphate = di-trans,octa-cis-undecaprenyl diphosphate + 8 diphosphate. In terms of biological role, catalyzes the sequential condensation of isopentenyl diphosphate (IPP) with (2E,6E)-farnesyl diphosphate (E,E-FPP) to yield (2Z,6Z,10Z,14Z,18Z,22Z,26Z,30Z,34E,38E)-undecaprenyl diphosphate (di-trans,octa-cis-UPP). UPP is the precursor of glycosyl carrier lipid in the biosynthesis of bacterial cell wall polysaccharide components such as peptidoglycan and lipopolysaccharide. The protein is Ditrans,polycis-undecaprenyl-diphosphate synthase ((2E,6E)-farnesyl-diphosphate specific) of Pasteurella multocida (strain Pm70).